A 243-amino-acid chain; its full sequence is MLTFLIPTAKEMVIPKESYPHLLPQPSQAILKAMAAMTTEDLAKSYRIKEEAAKKEQQRWQDMASQQSLAYPAYQLFNGLMYRHIKRDKLTTQEQAYLTQQVYITSSFYGIIPANHPIAEHRHDFHTRIKIEGQSLKSYWRPCYNQFAKEHPQVISLLSSEFDDVFSKDCKQLWISPKFMAEKEGRFKTHSTISKKARGAFLTACMENNCQTVDSLKSLVFAGFYYHPDLSTDHEFVYIKKEA.

This sequence belongs to the UPF0246 family.

The sequence is that of UPF0246 protein MGAS9429_Spy1799 from Streptococcus pyogenes serotype M12 (strain MGAS9429).